Consider the following 351-residue polypeptide: S-adenosylmethionine:tRNA ribosyltransferase-isomerase (351 aa).

This sequence belongs to the QueA family. Monomer.

Its subcellular location is the cytoplasm. The enzyme catalyses 7-aminomethyl-7-carbaguanosine(34) in tRNA + S-adenosyl-L-methionine = epoxyqueuosine(34) in tRNA + adenine + L-methionine + 2 H(+). It participates in tRNA modification; tRNA-queuosine biosynthesis. Transfers and isomerizes the ribose moiety from AdoMet to the 7-aminomethyl group of 7-deazaguanine (preQ1-tRNA) to give epoxyqueuosine (oQ-tRNA). The chain is S-adenosylmethionine:tRNA ribosyltransferase-isomerase from Sphingopyxis alaskensis (strain DSM 13593 / LMG 18877 / RB2256) (Sphingomonas alaskensis).